Here is a 294-residue protein sequence, read N- to C-terminus: Cytidine deaminase (294 aa).

CMP/dCMP-type deaminase domains follow at residues 48-168 (DEDA…FGPK) and 186-294 (VSGD…VLLG). Substrate is bound at residue 89–91 (NME). His-102 is a binding site for Zn(2+). Glu-104 functions as the Proton donor in the catalytic mechanism. Cys-129 and Cys-132 together coordinate Zn(2+).

The protein belongs to the cytidine and deoxycytidylate deaminase family. In terms of assembly, homodimer. It depends on Zn(2+) as a cofactor.

It carries out the reaction cytidine + H2O + H(+) = uridine + NH4(+). It catalyses the reaction 2'-deoxycytidine + H2O + H(+) = 2'-deoxyuridine + NH4(+). Functionally, this enzyme scavenges exogenous and endogenous cytidine and 2'-deoxycytidine for UMP synthesis. The protein is Cytidine deaminase of Klebsiella pneumoniae (strain 342).